The chain runs to 207 residues: Putative tributyltin chloride resistance protein (207 aa).

The tract at residues 37 to 122 (NLPIELALMP…YHAIAALNLG (86 aa)) is slt-type domain. E49 is an active-site residue.

Belongs to the transglycosylase Slt family.

In Alteromonas sp. (strain M-1), this protein is Putative tributyltin chloride resistance protein (tbtA).